The following is an 857-amino-acid chain: DNA mismatch repair protein MutS (857 aa).

608–615 lines the ATP pocket; it reads GPNMSGKS.

Belongs to the DNA mismatch repair MutS family.

Functionally, this protein is involved in the repair of mismatches in DNA. It is possible that it carries out the mismatch recognition step. This protein has a weak ATPase activity. The sequence is that of DNA mismatch repair protein MutS from Lacticaseibacillus casei (strain BL23) (Lactobacillus casei).